The sequence spans 207 residues: MSETYVLKADLRTRVGKGSSRELRRNGQIPAVIYGDKQEPLAIAVSYKEIFYKIHGGGFKTTVATIEVDGKKIQVLPKDYQLDPVRDFPQHVDFLRVSAKSVVHVNVPVHFKNEEAAPGIKRGGVLNVVRHDVELIVPANAIPEALEIDLSGLEIGDSVHISAVKLPKGATPAIQDRDFTIATIAAPAGLKSEENAEGTAEEAKDGE.

The protein belongs to the bacterial ribosomal protein bL25 family. CTC subfamily. In terms of assembly, part of the 50S ribosomal subunit; part of the 5S rRNA/L5/L18/L25 subcomplex. Contacts the 5S rRNA. Binds to the 5S rRNA independently of L5 and L18.

Its function is as follows. This is one of the proteins that binds to the 5S RNA in the ribosome where it forms part of the central protuberance. This chain is Large ribosomal subunit protein bL25, found in Brucella canis (strain ATCC 23365 / NCTC 10854 / RM-666).